Reading from the N-terminus, the 273-residue chain is Chondrolectin (273 aa).

The first 21 residues, 1–21 (MSRVVSLLLGAALLCGHGAFC), serve as a signal peptide directing secretion. Topologically, residues 22–216 (RRVVSGQKVC…VVTEAGIIPN (195 aa)) are extracellular. Residues 35–179 (FKHPCYKMAY…CNMKHNYICK (145 aa)) form the C-type lectin domain. 2 disulfides stabilise this stretch: cysteine 61-cysteine 178 and cysteine 144-cysteine 170. Asparagine 86 is a glycosylation site (N-linked (GlcNAc...) asparagine). The chain crosses the membrane as a helical span at residues 217 to 237 (LIYVVIPTIPLLLLILVAFGT). The Cytoplasmic portion of the chain corresponds to 238-273 (CCFQMLHKSKGRTKTSPNQSTLWISKSTRKESGMEV). Residues 248–273 (GRTKTSPNQSTLWISKSTRKESGMEV) form a disordered region. Residues 251 to 263 (KTSPNQSTLWISK) are compositionally biased toward polar residues.

Interacts with RABGGTB. In terms of processing, N-glycosylated. As to expression, found in spleen, testis, prostate and fetal liver. Expression limited to vascular muscle of testis, smooth muscle of prostate stroma, heart muscle, skeletal muscle, crypts of small intestine, and red pulp of spleen. B lymphocytes express isoform 2 only; peripheral blood T lymphocytes express isoform 3 only; granulocytes and monocytes express neither isoform 2 nor isoform 3. During development of T lymphocytes, bone marrow progenitor cells express isoform 2 only; thymocytes at different stages of maturation express predominantly isoform 2 and weakly isoform 3, and mature thymocytes express only isoform 2.

The protein resides in the cytoplasm. It localises to the membrane. The protein localises to the endoplasmic reticulum. It is found in the endoplasmic reticulum membrane. Its function is as follows. May play a role in the development of the nervous system such as in neurite outgrowth and elongation. May be involved in motor axon growth and guidance. This is Chondrolectin (CHODL) from Homo sapiens (Human).